We begin with the raw amino-acid sequence, 300 residues long: Centromere protein O (300 aa).

Coiled coils occupy residues leucine 18–glutamine 42 and asparagine 83–histidine 109. Residue serine 35 is modified to Phosphoserine.

This sequence belongs to the CENP-O/MCM21 family. Component of the CENPA-CAD complex, composed of CENPI, CENPK, CENPL, CENPO, CENPP, CENPQ, CENPR and CENPS. The CENPA-CAD complex interacts with the CENPA-NAC complex, at least composed of CENPA, CENPC, CENPH, CENPM, CENPN, CENPT and CENPU.

It localises to the nucleus. The protein localises to the chromosome. It is found in the centromere. The protein resides in the kinetochore. Its function is as follows. Component of the CENPA-CAD (nucleosome distal) complex, a complex recruited to centromeres which is involved in assembly of kinetochore proteins, mitotic progression and chromosome segregation. May be involved in incorporation of newly synthesized CENPA into centromeres via its interaction with the CENPA-NAC complex. Modulates the kinetochore-bound levels of NDC80 complex. This chain is Centromere protein O (CENPO), found in Homo sapiens (Human).